We begin with the raw amino-acid sequence, 562 residues long: Catalase T (562 aa).

Residues histidine 64 and asparagine 137 contribute to the active site. Tyrosine 351 contacts heme.

It belongs to the catalase family. As to quaternary structure, homotetramer. Requires heme as cofactor.

It localises to the cytoplasm. The catalysed reaction is 2 H2O2 = O2 + 2 H2O. In terms of biological role, occurs in almost all aerobically respiring organisms and serves to protect cells from the toxic effects of hydrogen peroxide. In Saccharomyces cerevisiae (strain YJM789) (Baker's yeast), this protein is Catalase T (CTT1).